The sequence spans 277 residues: Large ribosomal subunit protein uL2 (277 aa).

Disordered stretches follow at residues 32–58 (KSLTKGKKLKSGRDSSGRISIRRRGGG) and 225–277 (VAMN…RRNK). Basic residues predominate over residues 258-277 (YKTRKKKRYSDKFIIKRRNK).

It belongs to the universal ribosomal protein uL2 family. Part of the 50S ribosomal subunit. Forms a bridge to the 30S subunit in the 70S ribosome.

Functionally, one of the primary rRNA binding proteins. Required for association of the 30S and 50S subunits to form the 70S ribosome, for tRNA binding and peptide bond formation. It has been suggested to have peptidyltransferase activity; this is somewhat controversial. Makes several contacts with the 16S rRNA in the 70S ribosome. This is Large ribosomal subunit protein uL2 from Borrelia garinii subsp. bavariensis (strain ATCC BAA-2496 / DSM 23469 / PBi) (Borreliella bavariensis).